The sequence spans 95 residues: Glutamyl-tRNA(Gln) amidotransferase subunit C (95 aa).

It belongs to the GatC family. As to quaternary structure, heterotrimer of A, B and C subunits.

The catalysed reaction is L-glutamyl-tRNA(Gln) + L-glutamine + ATP + H2O = L-glutaminyl-tRNA(Gln) + L-glutamate + ADP + phosphate + H(+). The enzyme catalyses L-aspartyl-tRNA(Asn) + L-glutamine + ATP + H2O = L-asparaginyl-tRNA(Asn) + L-glutamate + ADP + phosphate + 2 H(+). Its function is as follows. Allows the formation of correctly charged Asn-tRNA(Asn) or Gln-tRNA(Gln) through the transamidation of misacylated Asp-tRNA(Asn) or Glu-tRNA(Gln) in organisms which lack either or both of asparaginyl-tRNA or glutaminyl-tRNA synthetases. The reaction takes place in the presence of glutamine and ATP through an activated phospho-Asp-tRNA(Asn) or phospho-Glu-tRNA(Gln). The protein is Glutamyl-tRNA(Gln) amidotransferase subunit C of Moraxella catarrhalis (Branhamella catarrhalis).